Reading from the N-terminus, the 400-residue chain is Sensor histidine kinase LnrJ (400 aa).

Residues 1–2 (MK) lie on the Extracellular side of the membrane. Residues 3 to 23 (ALFFTRMFTLMVSCLMYLSIV) form a helical membrane-spanning segment. Topologically, residues 24–27 (KEDN) are cytoplasmic. The chain crosses the membrane as a helical span at residues 28-48 (WFGYVFIAAGAAMYAANHVLL). Over 49 to 61 (TKETNAIWFCLID) the chain is Extracellular. A helical transmembrane segment spans residues 62–82 (IAIGFSFGFIFPGTGLFIIML). Residues 83 to 101 (CPVAVAFFLRGFPKRTAWS) are Cytoplasmic-facing. Residues 102–122 (VLCLSSILFLTVLIRTYAMFG) form a helical membrane-spanning segment. At 123-125 (NEF) the chain is on the extracellular side. The chain crosses the membrane as a helical span at residues 126-146 (VIDHLTSMTFVVFCGVVGKLI). Over 147–400 (RKLLDAQDTA…GPVQQKESLS (254 aa)) the chain is Cytoplasmic. Positions 190 to 385 (IYERNRMARE…TVNAEFSLAN (196 aa)) constitute a Histidine kinase domain. H201 carries the post-translational modification Phosphohistidine; by autocatalysis.

Post-translationally, autophosphorylated.

Its subcellular location is the cell membrane. It catalyses the reaction ATP + protein L-histidine = ADP + protein N-phospho-L-histidine.. Required for resistance to linearmycins, a family of antibiotic-specialized metabolites produced by some streptomycetes. Member of the two-component regulatory system LnrJ/LnrK, which induces expression of the LnrLMN ABC transporter in response to linearmycins and other polyenes. Acts as a specific sensor for linearmycin, either directly through binding or indirectly through membrane perturbation. Probably activates LnrK by phosphorylation. May also promote biofilm formation. The sequence is that of Sensor histidine kinase LnrJ from Bacillus subtilis (strain 168).